Consider the following 404-residue polypeptide: uncharacterized protein (404 aa).

Residues 262 to 278 (VSTGDTSPCGTEDSSPA) show a composition bias toward polar residues. Disordered regions lie at residues 262-307 (VSTG…SPSL) and 319-340 (MKKS…SGAD). 3 positions are modified to phosphoserine: S268, S276, and S279. Residues T290 and T293 each carry the phosphothreonine modification. A phosphoserine mark is found at S304, S306, S324, S358, and S362. Basic and acidic residues predominate over residues 319–336 (MKKSHSANDSEEFFREDD).

This is an uncharacterized protein from Mus musculus (Mouse).